Consider the following 248-residue polypeptide: ATP synthase subunit a, chloroplastic (248 aa).

A run of 5 helical transmembrane segments spans residues 39–59, 96–116, 135–155, 200–220, and 221–241; these read QVLI…ILAV, VPFI…GALF, INTT…AGLT, LVVV…VMFL, and GLFT…AYIG.

This sequence belongs to the ATPase A chain family. F-type ATPases have 2 components, CF(1) - the catalytic core - and CF(0) - the membrane proton channel. CF(1) has five subunits: alpha(3), beta(3), gamma(1), delta(1), epsilon(1). CF(0) has four main subunits: a, b, b' and c.

The protein localises to the plastid. It is found in the chloroplast thylakoid membrane. Its function is as follows. Key component of the proton channel; it plays a direct role in the translocation of protons across the membrane. This chain is ATP synthase subunit a, chloroplastic, found in Pelargonium hortorum (Common geranium).